We begin with the raw amino-acid sequence, 244 residues long: Claudin-12 (244 aa).

The Cytoplasmic portion of the chain corresponds to 1-10 (MGCRDVHAAT). The helical transmembrane segment at 11–31 (VLSFLCGIASVAGLFAGTLLP) threads the bilayer. Residues 32 to 87 (NWRKLRLITFNRNEKNLTIYTGLWVKCARYDGSSDCLMYDRTWYLSVDQLDLRVLQ) are Extracellular-facing. Residues 88-108 (FALPLSIVIAMGALLLCLIGM) form a helical membrane-spanning segment. At 109–135 (CNTAFNSSVPNIKLAKCLVNSAGCHLV) the chain is on the cytoplasmic side. The helical transmembrane segment at 136-156 (AGLLFFLAGTVSLSPSIWAIF) threads the bilayer. Over 157-174 (YNSHLNRKFEPVFTFDYA) the chain is Extracellular. A helical membrane pass occupies residues 175-195 (VFVTIASSGGLFMTALLLFVW). The Cytoplasmic segment spans residues 196 to 244 (YCACKSLSSPFWQPLYSHAPGMHTYSQPYSSRSRLSAIEIDIPVVSHST). A phosphoserine mark is found at S228 and S231.

Belongs to the claudin family. As to quaternary structure, interacts with OCLN.

The protein resides in the cell junction. It localises to the tight junction. It is found in the cell membrane. In terms of biological role, plays a major role in tight junction-specific obliteration of the intercellular space, through calcium-independent cell-adhesion activity. The polypeptide is Claudin-12 (Cldn12) (Mus musculus (Mouse)).